Reading from the N-terminus, the 596-residue chain is Elongation factor 4 (596 aa).

One can recognise a tr-type G domain in the interval 2–184; it reads KHIRNFSIIA…VIVEQIPPPE (183 aa). GTP is bound by residues 14 to 19 and 131 to 134; these read DHGKST and NKID.

The protein belongs to the TRAFAC class translation factor GTPase superfamily. Classic translation factor GTPase family. LepA subfamily.

The protein localises to the cell inner membrane. The enzyme catalyses GTP + H2O = GDP + phosphate + H(+). Functionally, required for accurate and efficient protein synthesis under certain stress conditions. May act as a fidelity factor of the translation reaction, by catalyzing a one-codon backward translocation of tRNAs on improperly translocated ribosomes. Back-translocation proceeds from a post-translocation (POST) complex to a pre-translocation (PRE) complex, thus giving elongation factor G a second chance to translocate the tRNAs correctly. Binds to ribosomes in a GTP-dependent manner. In Shewanella pealeana (strain ATCC 700345 / ANG-SQ1), this protein is Elongation factor 4.